The chain runs to 431 residues: Ribosomal RNA small subunit methyltransferase B (431 aa).

Residues 254–260 (CAAPGGK), Asp277, Asp303, and Asp322 each bind S-adenosyl-L-methionine. Catalysis depends on Cys375, which acts as the Nucleophile. Residues 398-417 (LHATGTPASPGQQNLPGPEE) are disordered. Residues 403-412 (TPASPGQQNL) show a composition bias toward polar residues.

It belongs to the class I-like SAM-binding methyltransferase superfamily. RsmB/NOP family.

The protein resides in the cytoplasm. The catalysed reaction is cytidine(967) in 16S rRNA + S-adenosyl-L-methionine = 5-methylcytidine(967) in 16S rRNA + S-adenosyl-L-homocysteine + H(+). Functionally, specifically methylates the cytosine at position 967 (m5C967) of 16S rRNA. The protein is Ribosomal RNA small subunit methyltransferase B of Klebsiella pneumoniae (strain 342).